A 305-amino-acid polypeptide reads, in one-letter code: Axin interactor, dorsalization-associated protein A (305 aa).

The interval 153-220 (GTLLPRLPSE…RKEDTYVHFN (68 aa)) is axin-binding. Positions 156–303 (LPRLPSEPGM…LYLHLLQTLL (148 aa)) constitute a C2 Aida-type domain.

It belongs to the AIDA family.

In terms of biological role, acts as a ventralizing factor during embryogenesis. Inhibits axin-mediated JNK activation by binding axin and disrupting axin homodimerization. This in turn antagonizes a Wnt/beta-catenin-independent dorsalization pathway activated by axin/JNK-signaling. The chain is Axin interactor, dorsalization-associated protein A (aida-a) from Xenopus laevis (African clawed frog).